Consider the following 446-residue polypeptide: Transcription factor Dp-2 (446 aa).

Thr2 is modified (N-acetylthreonine). 2 positions are modified to phosphoserine; by CDK2: Ser24 and Ser42. Residues 60–82 (PQMIISTPQRIANSGSVLIGNPY) form an interaction with CEBPA region. The short motif at 103-118 (SDRKRAREFIDSDFSE) is the Nuclear localization signal element. At Ser122 the chain carries Phosphoserine. A DNA-binding region spans residues 129-210 (GKGLRHFSMK…PTGKKRNQVD (82 aa)). Positions 176–210 (DQENIRRRVYDALNVLMAMNIISSLPTGKKRNQVD) match the DEF box motif. A dimerization region spans residues 219–292 (NLEIEKQRRI…RKTVIDCSIS (74 aa)). The tract at residues 229–261 (ERIKQKRAQLQELLLQQIAFKNLVQRNRQNEQQ) is DCB1. A DCB2 region spans residues 274-330 (LPFIIINTSRKTVIDCSISSDKFEYLFNFDNTFEIHDDIEVLKRMGMSFGLESGKCS). The segment at 404–446 (LPASNSHQSSSAASHFSESRGETPCSFNDEDEEDEEEDPSSPE) is disordered. The segment covering 406–419 (ASNSHQSSSAASHF) has biased composition (low complexity). The segment covering 431 to 446 (NDEDEEDEEEDPSSPE) has biased composition (acidic residues).

It belongs to the E2F/DP family. As to quaternary structure, component of the DRTF1/E2F transcription factor complex. Forms heterodimers with E2F family members. The complex can interact with hypophosphorylated retinoblastoma protein RB1 and related proteins (RBL1 and RBL2) that inhibit the E2F transactivation domain. During the cell cycle, RB becomes phosphorylated in mid-to-late G1 phase, detaches from the DRTF1/E2F complex rendering E2F transcriptionally active. Interacts with GMCL. Component of the DREAM complex (also named LINC complex) at least composed of E2F4, E2F5, LIN9, LIN37, LIN52, LIN54, MYBL1, MYBL2, RBL1, RBL2, RBBP4, TFDP1 and TFDP2. The complex exists in quiescent cells where it represses cell cycle-dependent genes. It dissociates in S phase when LIN9, LIN37, LIN52 and LIN54 form a subcomplex that binds to MYBL2. The complex TFDP2:E2F1 interacts with CEBPA; the interaction prevents CEBPA binding to target gene promoters and represses its transcriptional activity. Phosphorylation by E2F1-bound cyclin A-CDK2, in the S phase, inhibits E2F-mediated DNA binding and transactivation. Expressed in all tissues examined. Highest levels in spleen and heart.

The protein localises to the nucleus. Its function is as follows. Can stimulate E2F-dependent transcription. Binds DNA cooperatively with E2F family members through the E2 recognition site, 5'-TTTC[CG]CGC-3', found in the promoter region of a number of genes whose products are involved in cell cycle regulation or in DNA replication. The TFDP2:E2F complex functions in the control of cell-cycle progression from G1 to S phase. The E2F1:DP complex appears to mediate both cell proliferation and apoptosis. Blocks adipocyte differentiation by repressing CEBPA binding to its target gene promoters. The sequence is that of Transcription factor Dp-2 (Tfdp2) from Mus musculus (Mouse).